The following is a 362-amino-acid chain: Chorismate synthase (362 aa).

Residue Arg-47 participates in NADP(+) binding. FMN contacts are provided by residues 124–126 (RSS), Gly-286, 301–305 (KPTAT), and Arg-327.

This sequence belongs to the chorismate synthase family. In terms of assembly, homotetramer. Requires FMNH2 as cofactor.

The enzyme catalyses 5-O-(1-carboxyvinyl)-3-phosphoshikimate = chorismate + phosphate. Its pathway is metabolic intermediate biosynthesis; chorismate biosynthesis; chorismate from D-erythrose 4-phosphate and phosphoenolpyruvate: step 7/7. Functionally, catalyzes the anti-1,4-elimination of the C-3 phosphate and the C-6 proR hydrogen from 5-enolpyruvylshikimate-3-phosphate (EPSP) to yield chorismate, which is the branch point compound that serves as the starting substrate for the three terminal pathways of aromatic amino acid biosynthesis. This reaction introduces a second double bond into the aromatic ring system. This Synechocystis sp. (strain ATCC 27184 / PCC 6803 / Kazusa) protein is Chorismate synthase.